The primary structure comprises 79 residues: Dolichyl-diphosphooligosaccharide--protein glycosyltransferase subunit TMEM258 (79 aa).

A run of 2 helical transmembrane segments spans residues 17 to 37 and 59 to 79; these read VFPHLTVVLLAIGMFFKAWFF and VASLFMGFGVHFLLLWVGIFV.

Belongs to the OST5 family. As to quaternary structure, component of the oligosaccharyltransferase (OST) complex.

It localises to the membrane. The protein resides in the endoplasmic reticulum. Its subcellular location is the cytoplasm. Its pathway is protein modification; protein glycosylation. In terms of biological role, subunit of the oligosaccharyl transferase (OST) complex that catalyzes the initial transfer of a defined glycan (Glc(3)Man(9)GlcNAc(2) in eukaryotes) from the lipid carrier dolichol-pyrophosphate to an asparagine residue within an Asn-X-Ser/Thr consensus motif in nascent polypeptide chains, the first step in protein N-glycosylation. N-glycosylation occurs cotranslationally and the complex associates with the Sec61 complex at the channel-forming translocon complex that mediates protein translocation across the endoplasmic reticulum (ER). All subunits are required for a maximal enzyme activity. The polypeptide is Dolichyl-diphosphooligosaccharide--protein glycosyltransferase subunit TMEM258 (Danio rerio (Zebrafish)).